The sequence spans 108 residues: ATP synthase peripheral stalk subunit F6, mitochondrial (108 aa).

The N-terminal 32 residues, 1–32 (MILQRLFRFSSIIRSAVSVHFRRNIGVTAVAF), are a transit peptide targeting the mitochondrion. 3 positions are modified to N6-acetyllysine: Lys-41, Lys-46, and Lys-79. 3 positions are modified to N6-acetyllysine; alternate: Lys-84, Lys-94, and Lys-99. 3 positions are modified to N6-succinyllysine; alternate: Lys-84, Lys-94, and Lys-99. Lys-105 carries the post-translational modification N6-acetyllysine.

The protein belongs to the eukaryotic ATPase subunit F6 family. In terms of assembly, component of the ATP synthase complex composed at least of ATP5F1A/subunit alpha, ATP5F1B/subunit beta, ATP5MC1/subunit c (homooctomer), MT-ATP6/subunit a, MT-ATP8/subunit 8, ATP5ME/subunit e, ATP5MF/subunit f, ATP5MG/subunit g, ATP5MK/subunit k, ATP5MJ/subunit j, ATP5F1C/subunit gamma, ATP5F1D/subunit delta, ATP5F1E/subunit epsilon, ATP5PF/subunit F6, ATP5PB/subunit b, ATP5PD/subunit d, ATP5PO/subunit OSCP. ATP synthase complex consists of a soluble F(1) head domain (subunits alpha(3) and beta(3)) - the catalytic core - and a membrane F(0) domain - the membrane proton channel (subunits c, a, 8, e, f, g, k and j). These two domains are linked by a central stalk (subunits gamma, delta, and epsilon) rotating inside the F1 region and a stationary peripheral stalk (subunits F6, b, d, and OSCP).

The protein localises to the mitochondrion. The protein resides in the mitochondrion inner membrane. Its function is as follows. Subunit F6, of the mitochondrial membrane ATP synthase complex (F(1)F(0) ATP synthase or Complex V) that produces ATP from ADP in the presence of a proton gradient across the membrane which is generated by electron transport complexes of the respiratory chain. ATP synthase complex consist of a soluble F(1) head domain - the catalytic core - and a membrane F(1) domain - the membrane proton channel. These two domains are linked by a central stalk rotating inside the F(1) region and a stationary peripheral stalk. During catalysis, ATP synthesis in the catalytic domain of F(1) is coupled via a rotary mechanism of the central stalk subunits to proton translocation. In vivo, can only synthesize ATP although its ATP hydrolase activity can be activated artificially in vitro. Part of the complex F(0) domain. Part of the complex F(0) domain and the peripheric stalk, which acts as a stator to hold the catalytic alpha(3)beta(3) subcomplex and subunit a/ATP6 static relative to the rotary elements. This is ATP synthase peripheral stalk subunit F6, mitochondrial from Macaca fascicularis (Crab-eating macaque).